A 775-amino-acid polypeptide reads, in one-letter code: Hepatocyte growth factor-regulated tyrosine kinase substrate (775 aa).

The 129-residue stretch at 15-143 (ATSQLLLETD…IMKVEGHVFP (129 aa)) folds into the VHS domain. The FYVE-type zinc finger occupies 160 to 220 (WVDAEECHRC…VCEPCYEQLN (61 aa)). C166, C169, C182, C185, C190, and C193 together coordinate Zn(2+). N6-acetyllysine is present on K207. Zn(2+) contacts are provided by C212 and C215. Y216 bears the Phosphotyrosine mark. The interval 223 to 319 (AEGKASSTTE…SPVNSSAPLA (97 aa)) is disordered. Residues 225–541 (GKASSTTELP…QRLQEQEKER (317 aa)) are interaction with SNX1. The region spanning 258 to 277 (QEEEELQLALALSQSEAEEK) is the UIM domain. Polar residues predominate over residues 307-316 (LYSSPVNSSA). Y308, Y329, and Y334 each carry phosphotyrosine. The tract at residues 338–405 (KQEEARKSPT…NGESEESHEQ (68 aa)) is disordered. The interaction with SNAP25 and TRAK2 stretch occupies residues 443 to 541 (SINTMHPQLL…QRLQEQEKER (99 aa)). The tract at residues 452–570 (LELLNQLDER…FPLPYAQLQA (119 aa)) is interaction with STAM. The interval 478–775 (ARGALSALRE…GSEAQLISFD (298 aa)) is interaction with NF2. An N6-succinyllysine modification is found at K549. Residues 640–657 (PGAQAAPQAQAGPTTSPA) are compositionally biased toward low complexity. Disordered stretches follow at residues 640–690 (PGAQ…PQTS) and 719–775 (QDAS…ISFD). Over residues 658–690 (YSSYQPTPTPGYQSVASQAPQSLPAISQPPQTS) the composition is skewed to polar residues. Residues 744–761 (TGPPQQQPPVAQPAPTQG) are compositionally biased toward pro residues.

Component of the ESCRT-0 complex composed of STAM or STAM2 and HGS. Part of a complex at least composed of HSG, STAM2 (or probably STAM) and EPS15. Interacts with STAM. Interacts with STAM2. Interacts with EPS15; the interaction is direct, calcium-dependent and inhibited by SNAP25. Identified in a complex with STAM and LITAF. Found in a complex with STAM and E3 ligase ITCH and DTX3L. Interacts with E3 ligase DTX3L; the interaction brings together STAM and HSG, promotes their recruitment to early endosomes and decreases STAM and HGS ubiquitination by ITCH. Interacts with NF2; the interaction is direct. Interacts with ubiquitin; the interaction is direct. Interacts with VPS37C. Interacts with SMAD1, SMAD2 and SMAD3. Interacts with TSG101; the interaction mediates the association with the ESCRT-I complex. Interacts with SNAP25; the interaction is direct and decreases with addition of increasing concentrations of free calcium. Interacts with SNX1; the interaction is direct. Component of a 550 kDa membrane complex at least composed of HGS and SNX1 but excluding EGFR. Interacts with TRAK1. Interacts with TRAK2. Component of the CART complex, at least composed of ACTN4, HGS/HRS, MYO5B and TRIM3. Interacts with ARRDC3. Identified in a complex containing at least ARRDC4, AVPR2 and HGS. Interacts (via UIM domain) with UBQLN1 (via ubiquitin-like domain). Interacts with LAPTM4B; promotes HGS ubiquitination. In terms of processing, phosphorylated on Tyr-334. This phosphorylation occurs in response to EGF. A minor site of phosphorylation on Tyr-329 is detected. Protein phosphorylation may also be triggered in response to IL-2, GM-CSF and HGF. Ubiquitinated by ITCH. Ubiquitous expression in adult and fetal tissues with higher expression in testis.

The protein localises to the cytoplasm. It localises to the early endosome membrane. The protein resides in the endosome. Its subcellular location is the multivesicular body membrane. In terms of biological role, involved in intracellular signal transduction mediated by cytokines and growth factors. When associated with STAM, it suppresses DNA signaling upon stimulation by IL-2 and GM-CSF. Could be a direct effector of PI3-kinase in vesicular pathway via early endosomes and may regulate trafficking to early and late endosomes by recruiting clathrin. May concentrate ubiquitinated receptors within clathrin-coated regions. Involved in down-regulation of receptor tyrosine kinase via multivesicular body (MVBs) when complexed with STAM (ESCRT-0 complex). The ESCRT-0 complex binds ubiquitin and acts as a sorting machinery that recognizes ubiquitinated receptors and transfers them to further sequential lysosomal sorting/trafficking processes. May contribute to the efficient recruitment of SMADs to the activin receptor complex. Involved in receptor recycling via its association with the CART complex, a multiprotein complex required for efficient transferrin receptor recycling but not for EGFR degradation. The sequence is that of Hepatocyte growth factor-regulated tyrosine kinase substrate (Hgs) from Mus musculus (Mouse).